We begin with the raw amino-acid sequence, 1048 residues long: Platelet-derived growth factor receptor beta (1048 aa).

An N-terminal signal peptide occupies residues 1-30 (MLRASAMRAAVLHLTVALAALLSSCTTVSC). At 31-528 (LKIVPEEKQL…LVSSSLFSQV (498 aa)) the chain is on the extracellular side. Residues 35 to 124 (PEEKQLILAE…EIKEVAVFVP (90 aa)) form the Ig-like C2-type 1 domain. Intrachain disulfides connect C52–C108 and C153–C194. N-linked (GlcNAc...) asparagine glycans are attached at residues N87, N159, N224, and N239. 2 consecutive Ig-like C2-type domains span residues 216-309 (PEDI…ASVN) and 319-406 (AVKS…KEVT). C240 and C293 are joined by a disulfide. Residues N309, N327, and N457 are each glycosylated (N-linked (GlcNAc...) asparagine). A disulfide bridge links C434 with C503. Residues 529–549 (VLLAVVLTLVPIIIMSIIILI) traverse the membrane as a helical segment. The Cytoplasmic portion of the chain corresponds to 550–1048 (AVWKKKPRYE…PIPDPKPEKS (499 aa)). Phosphotyrosine; by autocatalysis is present on residues Y558, Y575, and Y577. The region spanning 596 to 957 (LVLGRTLGSG…FLVHCVGDML (362 aa)) is the Protein kinase domain. ATP contacts are provided by residues 602–610 (LGSGAFGRV) and K630. Y735, Y746, Y758, Y766, and Y770 each carry phosphotyrosine; by autocatalysis. Catalysis depends on D821, which acts as the Proton acceptor. Phosphotyrosine; by autocatalysis is present on residues Y852 and Y1036.

Belongs to the protein kinase superfamily. Tyr protein kinase family. CSF-1/PDGF receptor subfamily. In terms of assembly, interacts with homodimeric PDGFB and PDGFD, and with heterodimers formed by PDGFA and PDGFB. Monomer in the absence of bound ligand. Interaction with homodimeric PDGFB, heterodimers formed by PDGFA and PDGFB or homodimeric PDGFD, leads to receptor dimerization, where both PDGFRA homodimers and heterodimers with PDGFRB are observed. Ubiquitinated. After autophosphorylation, the receptor is polyubiquitinated, leading to its degradation. In terms of processing, autophosphorylated on tyrosine residues upon ligand binding. Autophosphorylation occurs in trans, i.e. one subunit of the dimeric receptor phosphorylates tyrosine residues on the other subunit.

It is found in the cell membrane. Its subcellular location is the cytoplasmic vesicle. It localises to the lysosome lumen. The enzyme catalyses L-tyrosyl-[protein] + ATP = O-phospho-L-tyrosyl-[protein] + ADP + H(+). Its activity is regulated as follows. Present in an inactive conformation in the absence of bound ligand. Binding of PDGFB and/or PDGFD leads to dimerization and activation by autophosphorylation on tyrosine residues. Functionally, tyrosine-protein kinase that acts as a cell-surface receptor for homodimeric PDGFB and PDGFD and for heterodimers formed by PDGFA and PDGFB, and plays an essential role in the regulation of embryonic development, cell proliferation, survival, differentiation, chemotaxis and migration. Plays an essential role in blood vessel development by promoting proliferation, migration and recruitment of pericytes and smooth muscle cells to endothelial cells. Required for normal development of the cardiovascular system. Required for normal recruitment of pericytes (mesangial cells) in the kidney glomerulus, and for normal formation of a branched network of capillaries in kidney glomeruli. Promotes rearrangement of the actin cytoskeleton and the formation of membrane ruffles. Binding of its cognate ligands - homodimeric PDGFB, heterodimers formed by PDGFA and PDGFB or homodimeric PDGFD -leads to the activation of several signaling cascades; the response depends on the nature of the bound ligand and is modulated by the formation of heterodimers between PDGFRA and PDGFRB. Receptor signaling is down-regulated by protein phosphatases that dephosphorylate the receptor and its down-stream effectors, and by rapid internalization of the activated receptor. The protein is Platelet-derived growth factor receptor beta (pdgfrb) of Takifugu rubripes (Japanese pufferfish).